We begin with the raw amino-acid sequence, 195 residues long: Small ribosomal subunit protein uS5 (195 aa).

The tract at residues 1–20 is disordered; it reads MAREREGGGRGRREDREERD. Residues 23–86 enclose the S5 DRBM domain; the sequence is FVDKLVHINR…EAAKRGLIRV (64 aa). The interval 161 to 195 is disordered; sequence DSPRSVAARRGIKVSTLQSRRRDADPADQSEAAVA.

This sequence belongs to the universal ribosomal protein uS5 family. As to quaternary structure, part of the 30S ribosomal subunit. Contacts proteins S4 and S8.

Functionally, with S4 and S12 plays an important role in translational accuracy. Its function is as follows. Located at the back of the 30S subunit body where it stabilizes the conformation of the head with respect to the body. This chain is Small ribosomal subunit protein uS5, found in Methylobacterium radiotolerans (strain ATCC 27329 / DSM 1819 / JCM 2831 / NBRC 15690 / NCIMB 10815 / 0-1).